We begin with the raw amino-acid sequence, 20 residues long: Trypsin inhibitor DE-3 (20 aa).

Belongs to the protease inhibitor I3 (leguminous Kunitz-type inhibitor) family.

In terms of biological role, inhibition of trypsin. This Erythrina corallodendron (Coral tree) protein is Trypsin inhibitor DE-3.